The primary structure comprises 424 residues: Putative glutamate--cysteine ligase 2-3 (424 aa).

Disordered regions lie at residues 1-20 and 405-424; these read MQMAGRGANRRGQHRSPVLV and GAAADAHKDPAPMLTRVRRP.

Belongs to the glutamate--cysteine ligase type 2 family. YbdK subfamily.

The enzyme catalyses L-cysteine + L-glutamate + ATP = gamma-L-glutamyl-L-cysteine + ADP + phosphate + H(+). ATP-dependent carboxylate-amine ligase which exhibits weak glutamate--cysteine ligase activity. The sequence is that of Putative glutamate--cysteine ligase 2-3 from Paenarthrobacter aurescens (strain TC1).